We begin with the raw amino-acid sequence, 188 residues long: UPF0398 protein BBR47_29830 (188 aa).

Belongs to the UPF0398 family.

The chain is UPF0398 protein BBR47_29830 from Brevibacillus brevis (strain 47 / JCM 6285 / NBRC 100599).